We begin with the raw amino-acid sequence, 144 residues long: Large ribosomal subunit protein uL13 (144 aa).

Belongs to the universal ribosomal protein uL13 family. As to quaternary structure, part of the 50S ribosomal subunit.

Its function is as follows. This protein is one of the early assembly proteins of the 50S ribosomal subunit, although it is not seen to bind rRNA by itself. It is important during the early stages of 50S assembly. The chain is Large ribosomal subunit protein uL13 from Clostridium botulinum (strain ATCC 19397 / Type A).